Consider the following 433-residue polypeptide: Phosphomethylpyrimidine synthase 2 (433 aa).

Substrate-binding positions include N66, M94, Y123, H162, 184–186 (SRG), 225–228 (DALR), and E264. H268 lines the Zn(2+) pocket. Y291 is a binding site for substrate. H332 is a Zn(2+) binding site. C408, C411, and C415 together coordinate [4Fe-4S] cluster.

Belongs to the ThiC family. [4Fe-4S] cluster is required as a cofactor.

The catalysed reaction is 5-amino-1-(5-phospho-beta-D-ribosyl)imidazole + S-adenosyl-L-methionine = 4-amino-2-methyl-5-(phosphooxymethyl)pyrimidine + CO + 5'-deoxyadenosine + formate + L-methionine + 3 H(+). It participates in cofactor biosynthesis; thiamine diphosphate biosynthesis. Functionally, catalyzes the synthesis of the hydroxymethylpyrimidine phosphate (HMP-P) moiety of thiamine from aminoimidazole ribotide (AIR) in a radical S-adenosyl-L-methionine (SAM)-dependent reaction. The sequence is that of Phosphomethylpyrimidine synthase 2 from Saccharolobus solfataricus (strain ATCC 35092 / DSM 1617 / JCM 11322 / P2) (Sulfolobus solfataricus).